We begin with the raw amino-acid sequence, 472 residues long: Succinate-semialdehyde dehydrogenase [NADP(+)] (472 aa).

Residues 134-135, 158-161, and 210-211 each bind NADP(+); these read WN, KHAS, and GS. Residue E232 is the Proton acceptor of the active site. L233 is an NADP(+) binding site. Catalysis depends on C266, which acts as the Nucleophile. E363 is an NADP(+) binding site.

This sequence belongs to the aldehyde dehydrogenase family.

The catalysed reaction is succinate semialdehyde + NADP(+) + H2O = succinate + NADPH + 2 H(+). Its function is as follows. Catalyzes the NADP(+)-dependent oxidation of succinate semialdehyde to succinate. It is believed to be the main source of succinate semialdehyde dehydrogenase activity in Mycobacterium. The sequence is that of Succinate-semialdehyde dehydrogenase [NADP(+)] (gabD1) from Mycobacterium avium (strain 104).